Reading from the N-terminus, the 200-residue chain is MIGKLSGKIDSQCDDYVIIDVNGVGYLVYASGTTLAKLVEGRFYKLFIETHVREEHIHLYGFLTLEEKNFFNLLQSVNGIGTKMALSILSNLTPTDIKIAINNDDKNIFKAISGVGDKLTERIMLELKGKIAKIFSSSAIIKDSSNISSVEINEVIKALVNLGFTRFEAQNTVQGIITQNTKISIDELIKTALKNRNSSF.

The interval 1-63 is domain I; the sequence is MIGKLSGKID…EEHIHLYGFL (63 aa). Residues 64–142 form a domain II region; it reads TLEEKNFFNL…KIFSSSAIIK (79 aa). The interval 142–146 is flexible linker; the sequence is KDSSN. A domain III region spans residues 147 to 200; that stretch reads ISSVEINEVIKALVNLGFTRFEAQNTVQGIITQNTKISIDELIKTALKNRNSSF.

This sequence belongs to the RuvA family. As to quaternary structure, homotetramer. Forms an RuvA(8)-RuvB(12)-Holliday junction (HJ) complex. HJ DNA is sandwiched between 2 RuvA tetramers; dsDNA enters through RuvA and exits via RuvB. An RuvB hexamer assembles on each DNA strand where it exits the tetramer. Each RuvB hexamer is contacted by two RuvA subunits (via domain III) on 2 adjacent RuvB subunits; this complex drives branch migration. In the full resolvosome a probable DNA-RuvA(4)-RuvB(12)-RuvC(2) complex forms which resolves the HJ.

The protein resides in the cytoplasm. In terms of biological role, the RuvA-RuvB-RuvC complex processes Holliday junction (HJ) DNA during genetic recombination and DNA repair, while the RuvA-RuvB complex plays an important role in the rescue of blocked DNA replication forks via replication fork reversal (RFR). RuvA specifically binds to HJ cruciform DNA, conferring on it an open structure. The RuvB hexamer acts as an ATP-dependent pump, pulling dsDNA into and through the RuvAB complex. HJ branch migration allows RuvC to scan DNA until it finds its consensus sequence, where it cleaves and resolves the cruciform DNA. This is Holliday junction branch migration complex subunit RuvA from Rickettsia typhi (strain ATCC VR-144 / Wilmington).